Reading from the N-terminus, the 83-residue chain is Cytochrome b559 subunit alpha (83 aa).

Residues 21–35 (IIHSITIPSLFIAGW) form a helical membrane-spanning segment. A heme-binding site is contributed by His-23.

The protein belongs to the PsbE/PsbF family. Heterodimer of an alpha subunit and a beta subunit. PSII is composed of 1 copy each of membrane proteins PsbA, PsbB, PsbC, PsbD, PsbE, PsbF, PsbH, PsbI, PsbJ, PsbK, PsbL, PsbM, PsbT, PsbX, PsbY, PsbZ, Psb30/Ycf12, at least 3 peripheral proteins of the oxygen-evolving complex and a large number of cofactors. It forms dimeric complexes. Requires heme b as cofactor.

It is found in the plastid. The protein resides in the chloroplast thylakoid membrane. Functionally, this b-type cytochrome is tightly associated with the reaction center of photosystem II (PSII). PSII is a light-driven water:plastoquinone oxidoreductase that uses light energy to abstract electrons from H(2)O, generating O(2) and a proton gradient subsequently used for ATP formation. It consists of a core antenna complex that captures photons, and an electron transfer chain that converts photonic excitation into a charge separation. The chain is Cytochrome b559 subunit alpha from Lotus japonicus (Lotus corniculatus var. japonicus).